We begin with the raw amino-acid sequence, 625 residues long: Vacuolar-sorting receptor 7 (625 aa).

Positions 1 to 26 (MGLVNGRASLTFLLAALTIIAMVVEA) are cleaved as a signal peptide. Residues 27 to 564 (RFVVEKESIS…CIERYGSKTA (538 aa)) lie on the Lumenal side of the membrane. Residues 58 to 166 (DYGGFLIGSV…SFGDDLRQGF (109 aa)) form the PA domain. N-linked (GlcNAc...) asparagine glycosylation is found at Asn292, Asn400, and Asn432. EGF-like domains follow at residues 414 to 464 (ETNE…TSCT) and 467 to 513 (GPAR…LTCE). Intrachain disulfides connect Cys418–Cys436, Cys425–Cys445, Cys447–Cys463, Cys471–Cys491, Cys478–Cys499, Cys501–Cys512, and Cys542–Cys555. One can recognise an EGF-like 3; calcium-binding domain in the interval 514 to 556 (DINECKERSVCQCSGCRCKNSWGGYKCSCSGDRLYINDQDTCI). Residues 565 to 585 (WWLTFLILAIVAVAGLAGYIF) form a helical membrane-spanning segment. At 586–625 (YKYRFRSYMDSEIMTIMSQYMPLESQRAREVPSEAEPFTL) the chain is on the cytoplasmic side. The short motif at 605–608 (YMPL) is the Tyrosine-based internalization motif element.

It belongs to the VSR (BP-80) family. Expressed at low levels in seedlings, roots, young leaves, flowers and siliques.

It is found in the golgi apparatus membrane. Functionally, vacuolar-sorting receptor (VSR) involved in clathrin-coated vesicles sorting from Golgi apparatus to vacuoles. This Arabidopsis thaliana (Mouse-ear cress) protein is Vacuolar-sorting receptor 7 (VSR7).